The sequence spans 398 residues: Phosphomevalonate dehydratase large subunit (398 aa).

(R)-5-phosphomevalonate is bound by residues Gly48, Val49, Ser50, Asn76, and Pro77. Cys116 is a binding site for [4Fe-4S] cluster. (R)-5-phosphomevalonate-binding residues include Glu136 and Ser137. 2 residues coordinate [4Fe-4S] cluster: Cys287 and Cys342. Residue Lys361 participates in (R)-5-phosphomevalonate binding.

Belongs to the AcnX type II large subunit family. As to quaternary structure, heterodimer composed of a large subunit (PMDh-L) and a small subunit (PMDh-S). The cofactor is [4Fe-4S] cluster.

The catalysed reaction is (R)-5-phosphomevalonate = (2E)-3-methyl-5-phosphooxypent-2-enoate + H2O. Its pathway is isoprenoid biosynthesis; isopentenyl diphosphate biosynthesis via mevalonate pathway. Component of a hydro-lyase that catalyzes the dehydration of mevalonate 5-phosphate (MVA5P) to form trans-anhydromevalonate 5-phosphate (tAHMP). Involved in the archaeal mevalonate (MVA) pathway, which provides fundamental precursors for isoprenoid biosynthesis, such as isopentenyl diphosphate (IPP) and dimethylallyl diphosphate (DMAPP). The polypeptide is Phosphomevalonate dehydratase large subunit (Methanosarcina mazei (strain ATCC BAA-159 / DSM 3647 / Goe1 / Go1 / JCM 11833 / OCM 88) (Methanosarcina frisia)).